Here is a 178-residue protein sequence, read N- to C-terminus: Probable DNA-directed RNA polymerase subunit delta (178 aa).

An HTH HARE-type domain is found at 14–81 (KSFIDMAYTL…GENLWGLRDW (68 aa)). Positions 114–178 (LGDDDADEDD…AFEDAEDFND (65 aa)) are disordered. Acidic residues predominate over residues 116 to 178 (DDDADEDDDI…AFEDAEDFND (63 aa)).

It belongs to the RpoE family. RNAP is composed of a core of 2 alpha, a beta and a beta' subunits. The core is associated with a delta subunit and one of several sigma factors.

Participates in both the initiation and recycling phases of transcription. In the presence of the delta subunit, RNAP displays an increased specificity of transcription, a decreased affinity for nucleic acids, and an increased efficiency of RNA synthesis because of enhanced recycling. The sequence is that of Probable DNA-directed RNA polymerase subunit delta from Staphylococcus epidermidis (strain ATCC 35984 / DSM 28319 / BCRC 17069 / CCUG 31568 / BM 3577 / RP62A).